The following is a 2039-amino-acid chain: Methylcytosine dioxygenase TET1 (2039 aa).

Basic residues predominate over residues 1-19; the sequence is MSRSRPAKPSKSVKTKLQK. Disordered stretches follow at residues 1 to 79, 119 to 168, and 227 to 286; these read MSRS…AGAA, VVTP…NGEQ, and DNEC…GFPD. Basic and acidic residues-rich tracts occupy residues 53 to 65 and 138 to 149; these read KRRD…EDKT and IQDEPGVKHSEN. 2 stretches are compositionally biased toward polar residues: residues 150-168 and 241-265; these read DSVP…NGEQ and QRST…SQVE. Residues 512–657 are sufficient for binding to genomic CpG islands; the sequence is LDLTQGSQAA…NGPKSESMDC (146 aa). A CXXC-type zinc finger spans residues 567 to 608; sequence ERRKRKACGVCEPCQQKANCGECTYCKNRKNSHQICKKRKCE. Zn(2+) is bound by residues Cys574, Cys577, Cys580, Cys586, Cys589, Cys592, Cys602, and Cys607. Disordered regions lie at residues 613 to 670, 711 to 735, 820 to 859, 882 to 906, 964 to 993, 1050 to 1129, 1209 to 1240, and 1322 to 1341; these read KPEA…QRLD, CDAN…NPSP, GAEP…VQPS, QLSE…HQKT, QGYP…SHPL, VRNA…KKQE, VEPS…QGQP, and KREA…DSAQ. Residues 653–670 show a composition bias toward basic and acidic residues; sequence ESMDCSRRGHGEEEQRLD. A compositionally biased stretch (polar residues) spans 825 to 835; sequence IFNNHPNTHSA. Positions 840–852 are enriched in basic and acidic residues; sequence HPPEKVPNKEPKD. The residue at position 854 (Ser854) is a Phosphoserine. The segment covering 884–894 has biased composition (low complexity); it reads SEAPSESSSPS. Basic and acidic residues predominate over residues 895 to 904; sequence KPEKDEEAHQ. Polar residues predominate over residues 1053–1064; the sequence is AESTPESLVAKN. Positions 1094–1116 are enriched in basic residues; sequence KPKKAQKKARATPHANKRKKKPP. 2 stretches are compositionally biased toward polar residues: residues 1214 to 1227 and 1326 to 1341; these read SLPT…SGGQ and QTSS…DSAQ. Positions 1371, 1373, 1430, 1456, and 1458 each coordinate Zn(2+). Arg1499 is a 2-oxoglutarate binding site. Zn(2+)-binding residues include Cys1509, Cys1511, Cys1527, and Cys1536. The interval 1528–1541 is interaction with DNA; sequence SWSMYFNGCKFGRS. Residue Lys1537 forms a Glycyl lysine isopeptide (Lys-Gly) (interchain with G-Cter in ubiquitin) linkage. Residue Cys1628 participates in Zn(2+) binding. A 2-oxoglutarate-binding site is contributed by Cys1644. His1650 contributes to the Zn(2+) binding site. His1652 and Asp1654 together coordinate Fe cation. Substrate is bound at residue Asn1657. His1685 contributes to the 2-oxoglutarate binding site. Over residues 1734–1743 the composition is skewed to basic residues; sequence GKRAKMKQNH. Disordered regions lie at residues 1734–1760 and 1830–1901; these read GKRA…ASST and AAHP…LPQL. Residues 1748-1760 are compositionally biased toward low complexity; it reads SHNTKSFSSASST. The span at 1850 to 1875 shows a compositional bias: polar residues; the sequence is TSPSEQLTSNQSNQQLPLLSNSQKLA. Over residues 1880–1895 the composition is skewed to basic and acidic residues; the sequence is EDERHPEADEPQHPED. A Fe cation-binding site is contributed by His1939. 1954 to 1956 contacts 2-oxoglutarate; that stretch reads RVS. 1960–1962 contacts substrate; that stretch reads YQH. Residue His1970 participates in Zn(2+) binding.

The protein belongs to the TET family. Interacts with SIN3A; recruits the transcriptional co-repressor SIN3A to gene promoters. Interacts with HCFC1. Interacts (via C-terminus) with OGT. Found in a complex composed of at least SINHCAF, SIN3A, HDAC1, SAP30, RBBP4, OGT and TET1. Interacts with QSER1. Interacts with NONO (via DNA-binding domain); this interaction recruits TET1 to genomic loci. Interacts with FOXA2; this interaction may recruit TET1 to specific enhancers to preserve their unmethylated status and hence allowing gene expression. Interacts with RNF2. Directly interacts (via C-terminus) with the DCAF1 component of the CRL4(VprBP) E3 ubiquitin-protein ligase complex. In terms of assembly, interacts with UHRF1; this interaction induces the recruitment of TET1 to replicating heterochromatin. Interacts with DCAF1. Requires Fe(2+) as cofactor. It depends on Zn(2+) as a cofactor. Post-translationally, glycosylated. Interaction with OGT leads to GlcNAcylation. Monoubiquitinated by the DCX (DDB1-CUL4-X-box) E3 ubiquitin-protein ligase complex called CRL4(VprBP) or CUL4A-RBX1-DDB1-DCAF1/VPRBP complex. In terms of processing, monoubiquitinated by the DCX (DDB1-CUL4-X-box) E3 ubiquitin-protein ligase complex called CRL4(VprBP) or CUL4A-RBX1-DDB1-DCAF1/VPRBP complex; this modification promotes binding to DNA. Expressed in germinal vesicle (GV) stage and MII-stage oocytes and in early embryos. Also detected somatic tissues, including brain, liver and kidney, but at very low levels. In terms of tissue distribution, predominantly expressed in early embryos. Also expressed in embryonic stem cells and in primordial germ cells. Expressed in adult tissues, including brain cortex, cerebellum, heart, kidney, liver, muscle and spleen, although at much lower levels than isoform 2. In the brain, expressed at higher levels in glial cells than in neurons. Expressed in placenta. Expressed in the pituitary, most probably in thyrotropes. As to expression, preferentially expressed in differentiated cells, including in cerebral cortex, cerebellum and thymus. Also expressed in heart, kidney, liver, muscle and spleen at much higher levels than isoform 1. In the brain, expressed at higher levels in neurons than in glial cells. Expressed in the olfactory bulb and in the mammary gland.

It is found in the nucleus. Its subcellular location is the chromosome. It catalyses the reaction a 5-methyl-2'-deoxycytidine in DNA + 2-oxoglutarate + O2 = a 5-hydroxymethyl-2'-deoxycytidine in DNA + succinate + CO2. The enzyme catalyses a 5-hydroxymethyl-2'-deoxycytidine in DNA + 2-oxoglutarate + O2 = a 5-formyl-2'-deoxycytidine in DNA + succinate + CO2 + H2O. It carries out the reaction a 5-formyl-2'-deoxycytidine in DNA + 2-oxoglutarate + O2 = a 5-carboxyl-2'-deoxycytidine in DNA + succinate + CO2 + H(+). In terms of biological role, dioxygenase that plays a key role in active DNA demethylation, by catalyzing the sequential oxidation of the modified genomic base 5-methylcytosine (5mC) into 5-hydroxymethylcytosine (5hmC), 5-formylcytosine (5fC), and 5-carboxylcytosine (5caC). In addition to its role in DNA demethylation, plays a more general role in chromatin regulation by recruiting histone modifying protein complexes to alter histone marks and chromatin accessibility, leading to both activation and repression of gene expression. Plays therefore a role in many biological processes, including stem cell maintenance, T- and B-cell development, inflammation regulation, iron homeostasis, neural activity or DNA repair. Involved in the balance between pluripotency and lineage commitment of cells it plays a role in embryonic stem cells maintenance and inner cell mass cell specification. Together with QSER1, plays an essential role in the protection and maintenance of transcriptional and developmental programs to inhibit the binding of DNMT3A/3B and therefore de novo methylation. May play a role in the pancreatic beta-cell specification during development. In this context, may function as an upstream epigenetic regulator of PAX4 presumably through direct recruitment by FOXA2 to a PAX4 enhancer to preserve its unmethylated status, thereby potentiating PAX4 expression to adopt beta-cell fate during endocrine lineage commitment. Under DNA hypomethylation conditions, such as in female meiotic germ cells, may induce epigenetic reprogramming of pericentromeric heterochromatin (PCH), the constitutive heterochromatin of pericentromeric regions. PCH forms chromocenters in the interphase nucleus and chromocenters cluster at the prophase of meiosis. In this context, may also be essential for chromocenter clustering in a catalytic activity-independent manner, possibly through the recruitment polycomb repressive complex 1 (PRC1) to the chromocenters. During embryonic development, may be required for normal meiotic progression in oocytes and meiotic gene activation. Binds preferentially to DNA containing cytidine-phosphate-guanosine (CpG) dinucleotides over CpH (H=A, T, and C), hemimethylated-CpG and hemimethylated-hydroxymethyl-CpG. Dioxygenase that plays a key role in active DNA demethylation. Binds to promoters, particularly to those with high CG content. In hippocampal neurons, isoform 1 regulates the expression of a unique subset of genes compared to isoform 2, although some overlap between both isoforms, hence differentially regulates excitatory synaptic transmission. In hippocampal neuron cell cultures, isoform 1 controls both miniature excitatory postsynaptic current amplitude and frequency. Isoform 1 may regulate genes involved in hippocampal-dependent memory, leading to positive regulation of memory, contrary to isoform 2 that may decrease memory. Functionally, dioxygenase that plays a key role in active DNA demethylation. As isoform 1, binds to promoters, particularly to those with high CG content, however displays reduced global chromatin affinity compared with isoform 1, leading to decreased global DNA demethylation compared with isoform 1. Contrary to isoform 1, isoform 2 localizes during S phase to sites of ongoing DNA replication in heterochromatin, causing a significant de novo 5hmC formation, globally, and more so in heterochromatin, including LINE 1 interspersed DNA repeats leading to their activation. In hippocampal neurons, isoform 2 regulates the expression of a unique subset of genes compared with isoform 1, although some overlap between both isoforms, hence differentially regulating excitatory synaptic transmission. In hippocampal neuron cell cultures, isoform 2 controls miniature excitatory postsynaptic current frequency, but not amplitude. Isoform 2 may regulate genes involved in hippocampal-dependent memory, leading to negative regulation of memory, contrary to isoform 1 that may improve memory. In immature and partially differentiated gonadotrope cells, represses luteinizing hormone gene LHB expression directly and does not catalyze 5hmC at the gene promoter. In Mus musculus (Mouse), this protein is Methylcytosine dioxygenase TET1 (Tet1).